The chain runs to 298 residues: ADP/ATP translocase 1 (298 aa).

Topologically, residues 1–7 are mitochondrial intermembrane; the sequence is MSDQALS. The residue at position 2 (S2) is an N-acetylserine. The Solcar 1 repeat unit spans residues 6–98; sequence LSFLKDFLAG…FAFKDKYKQI (93 aa). S7 is modified (phosphoserine). Residues 8–37 form a helical membrane-spanning segment; sequence FLKDFLAGGVAAAISKTAVAPIERVKLLLQ. Residues 38–74 are Mitochondrial matrix-facing; that stretch reads VQHASKQISAEKQYKGIIDCVVRIPKEQGFLSFWRGN. The residue at position 52 (K52) is an N6,N6,N6-trimethyllysine. The residue at position 52 (K52) is an N6-methyllysine. The chain crosses the membrane as a helical span at residues 75-99; the sequence is LANVIRYFPTQALNFAFKDKYKQIF. ADP is bound by residues R80 and K92. Residues 100–109 are Mitochondrial intermembrane-facing; sequence LGGVDRHKQF. Residues 110–130 traverse the membrane as a helical segment; the sequence is WRYFAGNLASGGAAGATSLCF. Solcar repeat units lie at residues 111–201 and 212–297; these read RYFA…AKGM and VSWM…IKKF. The Mitochondrial matrix portion of the chain corresponds to 131 to 178; sequence VYPLDFARTRLAADVGKGAAQREFTGLGNCITKIFKSDGLRGLYQGFN. K147 carries the N6-succinyllysine modification. C160 carries the post-translational modification S-nitrosocysteine. The chain crosses the membrane as a helical span at residues 179-199; that stretch reads VSVQGIIIYRAAYFGVYDTAK. The Mitochondrial intermembrane segment spans residues 200 to 210; sequence GMLPDPKNVHI. Residues 211–231 traverse the membrane as a helical segment; the sequence is IVSWMIAQTVTAVAGLVSYPF. Residues 232 to 273 lie on the Mitochondrial matrix side of the membrane; that stretch reads DTVRRRMMMQSGRKGADIMYTGTVDCWRKIAKDEGPKAFFKG. ADP is bound at residue R235. The interval 235 to 240 is important for transport activity; it reads RRRMMM. Positions 235–240 match the Nucleotide carrier signature motif motif; that stretch reads RRRMMM. N6-succinyllysine occurs at positions 245 and 272. The chain crosses the membrane as a helical span at residues 274–291; that stretch reads AWSNVLRGMGGAFVLVLY. The Mitochondrial intermembrane portion of the chain corresponds to 292–298; the sequence is DEIKKFV.

This sequence belongs to the mitochondrial carrier (TC 2.A.29) family. In terms of assembly, monomer. Found in a complex with ARL2, ARL2BP and SLC25A4/ANT1. Interacts with ARL2BP. Interacts with TIMM44; leading to inhibit the presequence translocase TIMM23, thereby promoting stabilization of PINK1. Post-translationally, under cell death induction, transglutaminated by TGM2. Transglutamination leads to formation of covalent cross-links between a glutamine and the epsilon-amino group of a lysine residue, forming polymers. As to expression, detected in heart muscle (at protein level). Detected in heart.

The protein resides in the mitochondrion inner membrane. It localises to the membrane. The enzyme catalyses ADP(in) + ATP(out) = ADP(out) + ATP(in). It carries out the reaction H(+)(in) = H(+)(out). The matrix-open state (m-state) is inhibited by the membrane-permeable bongkrekic acid (BKA). The cytoplasmic-open state (c-state) is inhibited by the membrane-impermeable toxic inhibitor carboxyatractyloside (CATR). Proton transporter activity is inhibited by ADP:ATP antiporter activity. Its function is as follows. ADP:ATP antiporter that mediates import of ADP into the mitochondrial matrix for ATP synthesis, and export of ATP out to fuel the cell. Cycles between the cytoplasmic-open state (c-state) and the matrix-open state (m-state): operates by the alternating access mechanism with a single substrate-binding site intermittently exposed to either the cytosolic (c-state) or matrix (m-state) side of the inner mitochondrial membrane. In addition to its ADP:ATP antiporter activity, also involved in mitochondrial uncoupling and mitochondrial permeability transition pore (mPTP) activity. Plays a role in mitochondrial uncoupling by acting as a proton transporter: proton transport uncouples the proton flows via the electron transport chain and ATP synthase to reduce the efficiency of ATP production and cause mitochondrial thermogenesis. Proton transporter activity is inhibited by ADP:ATP antiporter activity, suggesting that SLC25A4/ANT1 acts as a master regulator of mitochondrial energy output by maintaining a delicate balance between ATP production (ADP:ATP antiporter activity) and thermogenesis (proton transporter activity). Proton transporter activity requires free fatty acids as cofactor, but does not transport it. Probably mediates mitochondrial uncoupling in tissues that do not express UCP1. Also plays a key role in mPTP opening, a non-specific pore that enables free passage of the mitochondrial membranes to solutes of up to 1.5 kDa, and which contributes to cell death. It is however unclear if SLC25A4/ANT1 constitutes a pore-forming component of mPTP or regulates it. Acts as a regulator of mitophagy independently of ADP:ATP antiporter activity: promotes mitophagy via interaction with TIMM44, leading to inhibit the presequence translocase TIMM23, thereby promoting stabilization of PINK1. This chain is ADP/ATP translocase 1, found in Bos taurus (Bovine).